The primary structure comprises 366 residues: tRNA-specific 2-thiouridylase MnmA (366 aa).

ATP-binding positions include Ala-6–Ser-13 and Leu-32. The Nucleophile role is filled by Cys-101. A disulfide bridge connects residues Cys-101 and Cys-199. Residue Gly-125 participates in ATP binding. An interaction with tRNA region spans residues Lys-149 to Gln-151. The Cysteine persulfide intermediate role is filled by Cys-199.

The protein belongs to the MnmA/TRMU family.

It localises to the cytoplasm. The enzyme catalyses S-sulfanyl-L-cysteinyl-[protein] + uridine(34) in tRNA + AH2 + ATP = 2-thiouridine(34) in tRNA + L-cysteinyl-[protein] + A + AMP + diphosphate + H(+). In terms of biological role, catalyzes the 2-thiolation of uridine at the wobble position (U34) of tRNA, leading to the formation of s(2)U34. In Corynebacterium diphtheriae (strain ATCC 700971 / NCTC 13129 / Biotype gravis), this protein is tRNA-specific 2-thiouridylase MnmA.